A 95-amino-acid polypeptide reads, in one-letter code: Large ribosomal subunit protein uL23 (95 aa).

The protein belongs to the universal ribosomal protein uL23 family. In terms of assembly, part of the 50S ribosomal subunit. Contacts protein L29, and trigger factor when it is bound to the ribosome.

One of the early assembly proteins it binds 23S rRNA. One of the proteins that surrounds the polypeptide exit tunnel on the outside of the ribosome. Forms the main docking site for trigger factor binding to the ribosome. This chain is Large ribosomal subunit protein uL23, found in Bacillus subtilis (strain 168).